Here is an 89-residue protein sequence, read N- to C-terminus: Small ribosomal subunit protein uS14A (89 aa).

Belongs to the universal ribosomal protein uS14 family. As to quaternary structure, part of the 30S ribosomal subunit. Contacts proteins S3 and S10.

Its function is as follows. Binds 16S rRNA, required for the assembly of 30S particles and may also be responsible for determining the conformation of the 16S rRNA at the A site. In Streptococcus agalactiae serotype Ia (strain ATCC 27591 / A909 / CDC SS700), this protein is Small ribosomal subunit protein uS14A.